A 39-amino-acid polypeptide reads, in one-letter code: U2-ctenitoxin-Co1a (39 aa).

Disulfide bonds are present. As to expression, expressed by the venom gland.

The protein localises to the secreted. Its function is as follows. Omega-agatoxins are antagonists of voltage-gated calcium channels (Cav). This Ctenus ornatus (Brazilian spider) protein is U2-ctenitoxin-Co1a.